The chain runs to 205 residues: Small ribosomal subunit protein uS4 (205 aa).

Residues 1-46 form a disordered region; it reads MSKRHSAKYKIDRRMGENLWGRPKSPVNSRSYGPGQHGQRRKSKVS. An S4 RNA-binding domain is found at 94–154; that stretch reads SRLDAIVYRA…EKSRNMALVL (61 aa).

The protein belongs to the universal ribosomal protein uS4 family. Part of the 30S ribosomal subunit. Contacts protein S5. The interaction surface between S4 and S5 is involved in control of translational fidelity.

One of the primary rRNA binding proteins, it binds directly to 16S rRNA where it nucleates assembly of the body of the 30S subunit. In terms of biological role, with S5 and S12 plays an important role in translational accuracy. This is Small ribosomal subunit protein uS4 from Caulobacter vibrioides (strain ATCC 19089 / CIP 103742 / CB 15) (Caulobacter crescentus).